A 1445-amino-acid chain; its full sequence is MDNTIGPRVDPSIRAFDFTALFEECFLDILPWSLFLLMLLVRLKFLLNRPKIIRVDRLCLIKEALWTLYAVVKLAQLILWASIAAFTTAGTVPAAALAFVGCMGGSVLSYFEHCRSRRPSSLLGILTLLILLCDVTRVRTMWLMDQPRAISILTTAALPINILLLVFESLTKTAVANEKEASRSKEEIVGILNRSVFWWLNSLFILGRKHVLHMGNLPRVDSKVLTSYAAPKVYERWESKPQSLMLQSLQAYPMTLLRGGLCRLFTALFVTSQPLLLKRTIRWFSEPSTPVSDAEGYGLIGAYLVVYGGRAVFTALAQHQNYRLITMIRASLVSLIYDRTLTLDLVEAKESAALTLMSTDVERIGQGLQFVHEIWATPAEFGVAIFLLQREVALGSLAPVIIIIVAIVGTVLLSMKIDPHQKEWIGAIERRIGSTTDMLRNMRGVKMSGFEDALTSILQAMRVEEVNISRATKLLFIGCQVFSTATATISPVLGFTIYVLMQRAQGKPGLASSSAFTSLSLFSILSSSVYIFLTSVPAIFSGISCFARVENYLVSENITGPTDAEGQDSEASSISAEKISIIAPKIAPSDYLLVIRDGSVRWKGQEKAVLSQINLCIEQGSFCVISGSVGSGKSSLLYAILGEASLKADTFHISTTSIAYCQQSPWLPDISVKECVLNGRDWDEDLYKRVIHACALSEDLAQLSAGDHTKVGYEGGTLSGGQRQRVALARALYSRRRLLLLDDTFSALDPKTEKSVSGNLFSSSGLLRELGTTVICTTGKPGNSNKYADYTLDLNKEGEAQLRNTQKDMQDDEIEASTYSREQNGPKKQEEDANHESNQSPETSQEHELAQESVPTFSSMIFYLRSTGMGFFALSFSLSLVYSFWQNFPTIWVNLWTQHDAKHPYGDLAKYIGVYILCAVLALVTHTVVTWFVNMACNGIDGAAVRAGPTRDTPENSGTASITGRGYVVFTNKHRAPMSYFESVDIGTITNHFSQDMEKVDLEIPLTGVQALFAFTSALVQLVMLSIGTKWMAITFPFIIAILAIIQRQYLKTSRQLRLLDLEAKSPLYSHFTETLSGLATIRAFGTHKQCQSINTERLDCSQGPFYLLYCAQRWLTLVLNLVIGAMAILMMGVTIKLRGSTGAGYIGLAFVNLTTFSQSIQSLLTWWTMMEASIGAVHRVQQFEKETPQEDVLGQVTSPPHSWPKAGLIELKELSASYLSSVSPVLRNVTFTVQPGQKVGICGRTGSGKTSLILCLQRMIKINSGSILIDGLNTSHVPAKTLRERLICIPQDALIFNGTVRLNLDPQSSFTDKQLQDNLRRVELWDLISSKGGLDATMQDGLLSHGQLQLFCLSRVLQKKSPIVILDEVSSSADEESQRLISKIIREDFKDRTVISIAHRLQQIADFDIILVFSQGQLVEQGSPEDLLGRDVSLFQDLFSQQDK.

Helical transmembrane passes span 21–41, 77–97, 119–138, 150–170, 187–207, 255–277, 297–317, 368–388, 392–412, 481–501, and 520–540; these read LFEE…MLLV, LILW…AAAL, PSSL…VTRV, ISIL…FESL, EIVG…FILG, TLLR…PLLL, YGLI…TALA, LQFV…IFLL, VALG…GTVL, VFST…YVLM, and SLFS…PAIF. The region spanning 259–541 is the ABC transmembrane type-1 1 domain; that stretch reads GGLCRLFTAL…FLTSVPAIFS (283 aa). One can recognise an ABC transporter 1 domain in the interval 595–821; it reads IRDGSVRWKG…DEIEASTYSR (227 aa). 627–634 serves as a coordination point for ATP; it reads GSVGSGKS. A disordered region spans residues 803-850; sequence RNTQKDMQDDEIEASTYSREQNGPKKQEEDANHESNQSPETSQEHELA. The segment covering 824–835 has biased composition (basic and acidic residues); sequence NGPKKQEEDANH. Transmembrane regions (helical) follow at residues 868–888, 912–932, 1004–1024, 1026–1046, 1116–1136, and 1147–1167; these read GMGF…WQNF, IGVY…VTWF, IPLT…QLVM, SIGT…LAII, LTLV…GVTI, and IGLA…LLTW. The region spanning 974 to 1173 is the ABC transmembrane type-1 2 domain; it reads HRAPMSYFES…LLTWWTMMEA (200 aa). The region spanning 1210–1441 is the ABC transporter 2 domain; sequence IELKELSASY…DVSLFQDLFS (232 aa). 1244 to 1251 provides a ligand contact to ATP; that stretch reads GRTGSGKT.

The protein belongs to the ABC transporter superfamily. ABCC family.

It is found in the cell membrane. ABC-type transporter; part of the gene cluster that mediates the biosynthesis of gramillins A and B, bicyclic lipopeptides that induce cell death in maize leaves but not in wheat leaves. May be involved in the secretion of gramillins. In Gibberella zeae (strain ATCC MYA-4620 / CBS 123657 / FGSC 9075 / NRRL 31084 / PH-1) (Wheat head blight fungus), this protein is ABC-type transporter FGSG_00046.